Reading from the N-terminus, the 298-residue chain is Enoyl-CoA hydratase AFT6-1 (298 aa).

Residues 1–39 (MTYSTTKSVAMNPDEDAPPSDINSSGRLMSHSEVEPRGN) are disordered.

Belongs to the enoyl-CoA hydratase/isomerase family.

It carries out the reaction a (3S)-3-hydroxyacyl-CoA = a (2E)-enoyl-CoA + H2O. The catalysed reaction is a 4-saturated-(3S)-3-hydroxyacyl-CoA = a (3E)-enoyl-CoA + H2O. It functions in the pathway mycotoxin biosynthesis. Its function is as follows. Enoyl-CoA hydratase; part of the gene clusters that mediate the biosynthesis of the host-selective toxins (HSTs) AF-toxins responsible for Alternaria black spot of strawberry disease by the strawberry pathotype. AF-toxin I and III are valine derivatives of 2,3-dyhydroxy-isovaleric acid and 2-hydroxy-isovaleric acid respectively, while AF II is an isoleucine derivative of 2-hydroxy-valeric acid. These derivatives are bound to a 9,10-epoxy-8-hydroxy-9-methyl-decatrienoic acid (EDA) moiety. On cellular level, AF-toxin affects plasma membrane of susceptible cells and cause a sudden increase in loss of K(+) after a few minutes of toxin treatment. The aldo-keto reductase AFTS1 catalyzes the conversion of 2-keto-isovaleric acid (2-KIV) to 2-hydroxy-isovaleric acid (2-HIV) by reduction of its ketone to an alcohol. The acyl-CoA ligase AFT1, the hydrolase AFT2 and the enoyl-CoA hydratases AFT3 and AFT6, but also the polyketide synthase AFT9, the acyl-CoA dehydrogenase AFT10, the cytochrome P450 monooxygenase AFT11 and the oxidoreductase AFT12 are all involved in the biosynthesis of the AK-, AF- and ACT-toxin common EDA structural moiety. The exact function of each enzyme, and of additional enzymes identified within the AF-toxin clusters have still to be determined. The polypeptide is Enoyl-CoA hydratase AFT6-1 (Alternaria alternata (Alternaria rot fungus)).